We begin with the raw amino-acid sequence, 530 residues long: Chaperone Ric-8A (530 aa).

Ser-435 carries the phosphoserine modification. Phosphothreonine occurs at positions 440 and 442. Ser-501, Ser-522, Ser-523, and Ser-527 each carry phosphoserine.

It belongs to the synembryn family. Interacts with GDP-bound G alpha proteins GNAI1, GNAO1 and GNAQ, and with GNA13 with lower affinity. Does not interact with G-alpha proteins when they are in complex with subunits beta and gamma. Interacts (via C-terminus) with RGS14; the interaction stimulates the dissociation of the complex between RGS14 and the active GTP-bound form of GNAI1. Interacts with NCS1; interaction is favored in the absence of Ca(2+) and myristoylation of NCS1 is not required. Post-translationally, phosphorylated at Ser-435 and Thr-440 by CK2, stabilizing its interface with G alpha proteins.

It localises to the cytoplasm. Its subcellular location is the cell cortex. Chaperone that specifically binds and folds nascent G alpha proteins prior to G protein heterotrimer formation, promoting their stability and activity: folds GNAI1, GNAO1, GNA13 and GNAQ. Does not fold G(s) G-alpha proteins GNAS nor GNAL. Also acts as a guanine nucleotide exchange factor (GEF) for G alpha proteins by stimulating exchange of bound GDP for free GTP. Involved in regulation of microtubule pulling forces during mitotic movement of chromosomes by stimulating G(i)-alpha protein (GNAI1), possibly leading to release G(i)-alpha-GTP and NuMA proteins from the NuMA-GPSM2-G(i)-alpha-GDP complex. Also acts as an activator for G(q)-alpha (GNAQ) protein by enhancing the G(q)-coupled receptor-mediated ERK activation. This Bos taurus (Bovine) protein is Chaperone Ric-8A (RIC8A).